The chain runs to 888 residues: Villin-like protein quail (888 aa).

The Gelsolin-like repeat unit spans residues 307–366 (GVYLLDNYGQSIWLWVGGQAPQADALSAMGNGRAFVKKKKYPDNTLVVRVLEGHEPVEFK). The 66-residue stretch at 823–888 (FDGHKKYPLT…MELKKQFKLF (66 aa)) folds into the HP domain.

The protein belongs to the villin/gelsolin family. In terms of tissue distribution, germline specific in adult flies.

Its function is as follows. Required for the formation of cytoplasmic actin filament bundles in nurse cells, possibly by regulating both the polymerization and organization of actin filaments. Mutations in quail result in female sterility due to the disruption of cytoplasmic transport from the nurse cells into the oocyte late in oogenesis. This chain is Villin-like protein quail (qua), found in Drosophila melanogaster (Fruit fly).